The sequence spans 355 residues: Type II methyltransferase M.MthZI (355 aa).

Belongs to the N(4)/N(6)-methyltransferase family. N(4) subfamily.

It carries out the reaction a 2'-deoxycytidine in DNA + S-adenosyl-L-methionine = an N(4)-methyl-2'-deoxycytidine in DNA + S-adenosyl-L-homocysteine + H(+). Functionally, a beta subtype methylase that recognizes the double-stranded sequence 5'-CTAG-3', methylates C-1 on both strands, and protects the DNA from cleavage by the MthZI endonuclease. This chain is Type II methyltransferase M.MthZI, found in Methanothermobacter thermautotrophicus (Methanobacterium thermoformicicum).